The primary structure comprises 367 residues: Queuine tRNA-ribosyltransferase (367 aa).

Residue Asp92 is the Proton acceptor of the active site. Residues 92 to 96, Asp146, Gln188, and Gly215 each bind substrate; that span reads DSGGF. The tract at residues 246–252 is RNA binding; that stretch reads GVGTPKD. Catalysis depends on Asp265, which acts as the Nucleophile. Residues Cys303, Cys305, Cys308, and His334 each coordinate Zn(2+).

Belongs to the queuine tRNA-ribosyltransferase family. In terms of assembly, homodimer. Within each dimer, one monomer is responsible for RNA recognition and catalysis, while the other monomer binds to the replacement base PreQ1. Zn(2+) is required as a cofactor.

The enzyme catalyses 7-aminomethyl-7-carbaguanine + guanosine(34) in tRNA = 7-aminomethyl-7-carbaguanosine(34) in tRNA + guanine. Its pathway is tRNA modification; tRNA-queuosine biosynthesis. Catalyzes the base-exchange of a guanine (G) residue with the queuine precursor 7-aminomethyl-7-deazaguanine (PreQ1) at position 34 (anticodon wobble position) in tRNAs with GU(N) anticodons (tRNA-Asp, -Asn, -His and -Tyr). Catalysis occurs through a double-displacement mechanism. The nucleophile active site attacks the C1' of nucleotide 34 to detach the guanine base from the RNA, forming a covalent enzyme-RNA intermediate. The proton acceptor active site deprotonates the incoming PreQ1, allowing a nucleophilic attack on the C1' of the ribose to form the product. After dissociation, two additional enzymatic reactions on the tRNA convert PreQ1 to queuine (Q), resulting in the hypermodified nucleoside queuosine (7-(((4,5-cis-dihydroxy-2-cyclopenten-1-yl)amino)methyl)-7-deazaguanosine). This chain is Queuine tRNA-ribosyltransferase, found in Francisella tularensis subsp. holarctica (strain FTNF002-00 / FTA).